The chain runs to 336 residues: DNA-directed RNA polymerase subunit alpha (336 aa).

Residues 1–232 (MIQKNWQELI…DQLGLFVNFE (232 aa)) form an alpha N-terminal domain (alpha-NTD) region. The alpha C-terminal domain (alpha-CTD) stretch occupies residues 248-336 (FNPALLKKVD…ELAKRYEDQY (89 aa)).

This sequence belongs to the RNA polymerase alpha chain family. In terms of assembly, homodimer. The RNAP catalytic core consists of 2 alpha, 1 beta, 1 beta' and 1 omega subunit. When a sigma factor is associated with the core the holoenzyme is formed, which can initiate transcription.

The enzyme catalyses RNA(n) + a ribonucleoside 5'-triphosphate = RNA(n+1) + diphosphate. DNA-dependent RNA polymerase catalyzes the transcription of DNA into RNA using the four ribonucleoside triphosphates as substrates. The protein is DNA-directed RNA polymerase subunit alpha of Chelativorans sp. (strain BNC1).